Reading from the N-terminus, the 189-residue chain is Movement protein p22 (189 aa).

It belongs to the tombusvirus/aureusvirus movement protein p22 family. Interacts with host protein HFI22. In terms of processing, phosphorylated.

The protein resides in the host membrane. Its function is as follows. Cell-to-cell movement. Displays RNA-binding activity. The sequence is that of Movement protein p22 from Capsicum annuum (Capsicum pepper).